Consider the following 1337-residue polypeptide: MEENEVESSSDAAPRPGQPEEPSESGLGVCTSEAVSADSSDAATVPGLTEADDSGVGQSSDGGNHSVEEVSESISTDPLPHGCLPDSSSVSRGPVAEMPGGPPALVHSSVLPDPSMLVSDCTASSSDLGSAIDKIIESTIGPDLIQSCITVTSGEEGGAETTQYLILQGPDDGAPMASSMSTSTLANSLAAIEALADGPTSTSACLEPPEEPQGDPSSVAQQPPAPVTEELDLQSLEAMMEVVVVQQFKCKMCQYRSSTKATLLRHMRERHFRPALAAAAAATGKRGRVRKWGTSTKTTEEDRPEEEEEDDDIVDAGAIDDLEEDSDYNPAEDEPRGRQLRLQRPTPSTPRPRRRPGRPRKLPRLETSDLHDGVGQPLVSSQSTQSPPELQDLEAPSSSGLRALGKVGRGLVESGVSQSDAENAAPSCQDEADAPPRRRGRPSRRFLGKKYRKYYYKSPKPLLRPYLCRICGSRFLSHEDLRFHVNSHEAGDPQLFRCLQCSYRSRRWSSLKEHMFNHVGSKPYKCDECSYTSVYRKDVIRHAAVHSQDRKKRPDPTPKLSSFPCPVCGRVYPMQKRLTQHMKTHSTEKPHMCDKCGKSFKKRYTFKMHLLTHIQAVANRRFKCEFCEFVCEDKKALLNHQLSHVSDKPFKCSFCPYRTFREDFLLSHVAVKHTGAKPFACEYCHFSTRHKKNLRLHVRCRHANSFEEWGRRHPEEPPSRRRPFFSLQQIEELKQQHSTAPGPPLSSPGPEAPQEPAPFQSPETPPLLCPDALGGTTIIYQQGAEESTAVATQTALDLLLNMSAQRELGATALQVAVVKSEGIEAELTSTGGQPSPEDTTPRVVTLHMAESGSSVAAESQLGPSDLQQIALPSGPFGGASYSVITAPPVEGRTSASGPPYREEPPGEAAQAVVVSDTLKEAGTHYIMAADGTQLHHIELTADGSISFPSPDTLAPGTKWPLLQCGGPPRDGSEVLSPTKTHHMGGSQGSSTPPPAASHTLGLVVPQSPPSAAASSTKKFSCKVCSEAFPSRAEMESHKRAHAGPAAFKCPDCPFSARQWPEVRAHMAQHSSLRPHQCNQCSFASKNKKDLRRHMLTHTNEKPFSCHVCGQRFNRNGHLKFHIQRLHSIDGRKTGTSTARAPAQTIILNSEEETLATLHTAFQSSHGVLGTERLQQALSQEHIIVAQEQTVTNQEEATYIQEITADGQTVQHLVTSDNQVQYIISQDGVQHLLPQEYVVVPDGHHIQVQEGQITHIQYEQGTPFLQESQIQYVPVSPSQQLVTQAQLEAAAHSAVTAVADAAMAQAQGLFGTEEAVPEQIHQLQHQGIEYDVITLSDD.

2 disordered regions span residues 1–108 and 198–226; these read MEEN…LVHS and GPTS…PPAP. 2 stretches are compositionally biased toward low complexity: residues 31 to 45 and 54 to 63; these read TSEA…AATV and SGVGQSSDGG. Residues 248–271 form a C2H2-type 1 zinc finger; it reads FKCKMCQYRSSTKATLLRHMRERH. Positions 278-444 are disordered; sequence AAAAATGKRG…PPRRRGRPSR (167 aa). Residues 302–332 show a composition bias toward acidic residues; that stretch reads DRPEEEEEDDDIVDAGAIDDLEEDSDYNPAE. Positions 351-362 are enriched in basic residues; the sequence is RPRRRPGRPRKL. The segment covering 363–372 has biased composition (basic and acidic residues); sequence PRLETSDLHD. The span at 378 to 388 shows a compositional bias: polar residues; that stretch reads LVSSQSTQSPP. 8 consecutive C2H2-type zinc fingers follow at residues 466–488, 496–518, 524–546, 563–585, 591–613, 622–644, 650–673, and 679–702; these read YLCR…VNSH, FRCL…MFNH, YKCD…AAVH, FPCP…MKTH, HMCD…LLTH, FKCE…QLSH, FKCS…AVKH, and FACE…RCRH. 2 disordered regions span residues 733–767 and 963–999; these read LKQQ…TPPL and QCGG…ASHT. Pro residues predominate over residues 741–756; that stretch reads PGPPLSSPGPEAPQEP. Residues Ser976 and Ser1007 each carry the phosphoserine modification. C2H2-type zinc fingers lie at residues 1019-1041, 1047-1069, 1075-1097, and 1103-1126; these read FSCK…KRAH, FKCP…MAQH, HQCN…MLTH, and FSCH…QRLH. Residue Lys1022 forms a Glycyl lysine isopeptide (Lys-Gly) (interchain with G-Cter in SUMO2) linkage. Ser1149 carries the phosphoserine modification.

It belongs to the krueppel C2H2-type zinc-finger protein family. Interacts with NCOA6; may enhance ligand-dependent transcriptional activation by nuclear hormone receptors. Interacts with CNOT6. Interacts with CNOT9; the interaction is direct. Component of a nuclear receptor-mediated transcription complex composed of at least ZNF335, CCAR2 and EMSY; the complex stimulates the transcription of nuclear receptor target genes such as SOX9 and HOXA1. Within the complex interacts with EMSY and interacts (via C-terminus) with CCAR2. Interacts with members of histone H3'Lys4'(H3K4) methyltransferase complexes ASH2L, CXXC1, KMT2A/MLL1, RBBP5, SETD1A and WDR5. Component of a histone methylation complex composed of at least ZNF335, RBBP5, ASH2L and WDR5; the complex may have histone H3-specific methyltransferase activity, however does not have specificity for 'Lys-4' of histone H3. Interacts with RBBP5 and WDR5. Interacts with ASHL2. Components of this complex may associate with components of the ZNF335-CCAR2-EMSY nuclear receptor-mediated transcription complex to form a complex at least composed of ZNF335, HCFC1, CCAR2, EMSY, MKI67, RBBP5, ASH2L and WDR5. Within this complex also interacts with HCFC1 and MKI67. In terms of tissue distribution, expressed at low levels in cerebral cortex, hippocampus and cerebellum (at protein level).

The protein localises to the nucleus. In terms of biological role, component or associated component of some histone methyltransferase complexes may regulate transcription through recruitment of those complexes on gene promoters. Enhances ligand-dependent transcriptional activation by nuclear hormone receptors. Plays an important role in neural progenitor cell proliferation and self-renewal through the regulation of specific genes involved brain development, including REST. Also controls the expression of genes involved in somatic development and regulates, for instance, lymphoblast proliferation. In Mus musculus (Mouse), this protein is Zinc finger protein 335 (Znf335).